The following is a 346-amino-acid chain: Phosphoribosylformylglycinamidine cyclo-ligase (346 aa).

The protein belongs to the AIR synthase family.

The protein localises to the cytoplasm. The enzyme catalyses 2-formamido-N(1)-(5-O-phospho-beta-D-ribosyl)acetamidine + ATP = 5-amino-1-(5-phospho-beta-D-ribosyl)imidazole + ADP + phosphate + H(+). It participates in purine metabolism; IMP biosynthesis via de novo pathway; 5-amino-1-(5-phospho-D-ribosyl)imidazole from N(2)-formyl-N(1)-(5-phospho-D-ribosyl)glycinamide: step 2/2. The polypeptide is Phosphoribosylformylglycinamidine cyclo-ligase (Photorhabdus laumondii subsp. laumondii (strain DSM 15139 / CIP 105565 / TT01) (Photorhabdus luminescens subsp. laumondii)).